The chain runs to 408 residues: uncharacterized protein (408 aa).

Residues 49-77 (PRSSPEVQRKATAGENSEVGSPESSLSTS) form a disordered region. A compositionally biased stretch (polar residues) spans 62-77 (GENSEVGSPESSLSTS). The region spanning 124 to 170 (SFEFMQLPDTDICQIMSFLDAQSLLNLSQTCSHLRQLCLAHEDNAGK) is the F-box domain.

This is an uncharacterized protein from Caenorhabditis elegans.